The following is a 128-amino-acid chain: Large ribosomal subunit protein uL22 (128 aa).

This sequence belongs to the universal ribosomal protein uL22 family. Part of the 50S ribosomal subunit.

In terms of biological role, this protein binds specifically to 23S rRNA; its binding is stimulated by other ribosomal proteins, e.g. L4, L17, and L20. It is important during the early stages of 50S assembly. It makes multiple contacts with different domains of the 23S rRNA in the assembled 50S subunit and ribosome. Functionally, the globular domain of the protein is located near the polypeptide exit tunnel on the outside of the subunit, while an extended beta-hairpin is found that lines the wall of the exit tunnel in the center of the 70S ribosome. In Nitrobacter hamburgensis (strain DSM 10229 / NCIMB 13809 / X14), this protein is Large ribosomal subunit protein uL22.